The sequence spans 126 residues: Non-specific lipid-transfer protein 13 (126 aa).

The signal sequence occupies residues 1 to 20; that stretch reads MDTHTTKLVAISLLLLLVIS. Cystine bridges form between cysteine 36-cysteine 85, cysteine 46-cysteine 61, cysteine 62-cysteine 109, and cysteine 83-cysteine 123.

The protein belongs to the plant LTP family.

In terms of biological role, plant non-specific lipid-transfer proteins transfer phospholipids as well as galactolipids across membranes. May play a role in wax or cutin deposition in the cell walls of expanding epidermal cells and certain secretory tissues. The polypeptide is Non-specific lipid-transfer protein 13 (LTP13) (Arabidopsis thaliana (Mouse-ear cress)).